The primary structure comprises 646 residues: Rho guanine nucleotide exchange factor 7 (646 aa).

An SH3 domain is found at asparagine 6–proline 65. 3 positions are modified to phosphoserine: serine 7, serine 71, and serine 79. The region spanning tyrosine 93–valine 273 is the DH domain. The region spanning aspartate 295–lysine 400 is the PH domain. Serine 340 carries the phosphoserine modification. Disordered stretches follow at residues threonine 402 to glutamate 464 and lysine 500 to phenylalanine 520. Positions proline 415–serine 428 are enriched in polar residues. Over residues lysine 500 to glutamate 512 the composition is skewed to basic residues. Phosphoserine occurs at positions 516 and 560.

In terms of assembly, interacts with SCRIB; interaction is direct and may play a role in regulation of apoptosis. Interacts with PAK kinases through the SH3 domain. Interacts with GIT1 and probably TGFB1I1. Interacts with ITCH and PARVB. Interacts with FRMPD4 (via N-terminus). Interacts with CaMK1. Interacts with PTK2/FAK1 and RAC1. Interacts with BIN2. Interacts with YWHAZ. Interacts (via PH domain) with NOX1 (via FAD-binding FR-type domain). Phosphorylated on Ser-516 by CaMK1; enhancement of GEF activity and downstream activation of RAC1. Phosphorylated by PTK2/FAK1; this promotes interaction with RAC1.

It is found in the cell junction. It localises to the focal adhesion. Its subcellular location is the cell projection. The protein resides in the ruffle. The protein localises to the cytoplasm. It is found in the cell cortex. It localises to the lamellipodium. Its function is as follows. Acts as a RAC1 guanine nucleotide exchange factor (GEF) and can induce membrane ruffling. Functions in cell migration, attachment and cell spreading. Promotes targeting of RAC1 to focal adhesions. May function as a positive regulator of apoptosis. Downstream of NMDA receptors and CaMKK-CaMK1 signaling cascade, promotes the formation of spines and synapses in hippocampal neurons. This chain is Rho guanine nucleotide exchange factor 7 (Arhgef7), found in Rattus norvegicus (Rat).